A 219-amino-acid polypeptide reads, in one-letter code: Probable transcription factor At1g55950 (219 aa).

A disordered region spans residues 9-77 (ASHSLKSLMA…DEKMETEEEG (69 aa)). Residues 17–30 (MAKKNKRSQQKNKC) are compositionally biased toward basic residues. A compositionally biased stretch (basic and acidic residues) spans 31–48 (LKPEKDPSTVKRLLEDPP). Over residues 65–77 (YGDDEKMETEEEG) the composition is skewed to acidic residues.

It belongs to the GeBP family.

This chain is Probable transcription factor At1g55950, found in Arabidopsis thaliana (Mouse-ear cress).